The primary structure comprises 207 residues: 2,3-bisphosphoglycerate-dependent phosphoglycerate mutase (207 aa).

Substrate-binding positions include 10-17 (RHGQSEWN), 23-24 (TG), arginine 62, 89-92 (ERDY), lysine 100, 116-117 (RR), and 160-161 (GN). Histidine 11 functions as the Tele-phosphohistidine intermediate in the catalytic mechanism. Catalysis depends on glutamate 89, which acts as the Proton donor/acceptor.

Belongs to the phosphoglycerate mutase family. BPG-dependent PGAM subfamily. In terms of assembly, homodimer.

It carries out the reaction (2R)-2-phosphoglycerate = (2R)-3-phosphoglycerate. It functions in the pathway carbohydrate degradation; glycolysis; pyruvate from D-glyceraldehyde 3-phosphate: step 3/5. Its function is as follows. Catalyzes the interconversion of 2-phosphoglycerate and 3-phosphoglycerate. The protein is 2,3-bisphosphoglycerate-dependent phosphoglycerate mutase of Rhodopseudomonas palustris (strain BisB18).